The primary structure comprises 411 residues: Anaerobic sulfatase-maturating enzyme homolog AslB (411 aa).

A Radical SAM core domain is found at 3 to 250; the sequence is QQVPTRAFHV…LVAIFDHWIK (248 aa). 2 residues coordinate [4Fe-4S] cluster: C21 and C25. Y27 contacts S-adenosyl-L-methionine. Residue C28 participates in [4Fe-4S] cluster binding. Residues G74, S129, and R141 each coordinate S-adenosyl-L-methionine. [4Fe-4S] cluster-binding residues include C276, C282, and C297. D298 serves as the catalytic Proton acceptor. The [4Fe-4S] cluster site is built by C339, C342, C348, C352, and C371.

This sequence belongs to the radical SAM superfamily. Anaerobic sulfatase-maturating enzyme family. It depends on [4Fe-4S] cluster as a cofactor.

The protein is Anaerobic sulfatase-maturating enzyme homolog AslB (aslB) of Escherichia coli (strain K12).